We begin with the raw amino-acid sequence, 103 residues long: Co-chaperonin GroES (103 aa).

This sequence belongs to the GroES chaperonin family. Heptamer of 7 subunits arranged in a ring. Interacts with the chaperonin GroEL.

The protein resides in the cytoplasm. In terms of biological role, together with the chaperonin GroEL, plays an essential role in assisting protein folding. The GroEL-GroES system forms a nano-cage that allows encapsulation of the non-native substrate proteins and provides a physical environment optimized to promote and accelerate protein folding. GroES binds to the apical surface of the GroEL ring, thereby capping the opening of the GroEL channel. The polypeptide is Co-chaperonin GroES (Prochlorococcus marinus (strain MIT 9211)).